Consider the following 430-residue polypeptide: Tol-Pal system protein TolB (430 aa).

An N-terminal signal peptide occupies residues 1–21 (MKQALRVAVSFFMLWAAVLHA).

The protein belongs to the TolB family. The Tol-Pal system is composed of five core proteins: the inner membrane proteins TolA, TolQ and TolR, the periplasmic protein TolB and the outer membrane protein Pal. They form a network linking the inner and outer membranes and the peptidoglycan layer.

Its subcellular location is the periplasm. In terms of biological role, part of the Tol-Pal system, which plays a role in outer membrane invagination during cell division and is important for maintaining outer membrane integrity. TolB occupies a key intermediary position in the Tol-Pal system because it communicates directly with both membrane-embedded components, Pal in the outer membrane and TolA in the inner membrane. This chain is Tol-Pal system protein TolB, found in Enterobacter sp. (strain 638).